The following is a 235-amino-acid chain: Protein GrpE (235 aa).

The span at 1-18 shows a compositional bias: polar residues; that stretch reads MTDGNQKPDGNSGEQVTV. Disordered regions lie at residues 1-50 and 198-235; these read MTDG…DAAH and ESVDDGTAVADTAENDQADQGNSADTLGEQAESEPSGS. The span at 19-35 shows a compositional bias: basic and acidic residues; it reads TDKRRIDPETGEVRHVP.

The protein belongs to the GrpE family. As to quaternary structure, homodimer.

The protein localises to the cytoplasm. Its function is as follows. Participates actively in the response to hyperosmotic and heat shock by preventing the aggregation of stress-denatured proteins, in association with DnaK and GrpE. It is the nucleotide exchange factor for DnaK and may function as a thermosensor. Unfolded proteins bind initially to DnaJ; upon interaction with the DnaJ-bound protein, DnaK hydrolyzes its bound ATP, resulting in the formation of a stable complex. GrpE releases ADP from DnaK; ATP binding to DnaK triggers the release of the substrate protein, thus completing the reaction cycle. Several rounds of ATP-dependent interactions between DnaJ, DnaK and GrpE are required for fully efficient folding. This Mycobacterium bovis (strain BCG / Pasteur 1173P2) protein is Protein GrpE.